The primary structure comprises 208 residues: Thymidylate kinase (208 aa).

Position 10-17 (10-17 (GPEGSGKT)) interacts with ATP.

The protein belongs to the thymidylate kinase family.

The catalysed reaction is dTMP + ATP = dTDP + ADP. Functionally, phosphorylation of dTMP to form dTDP in both de novo and salvage pathways of dTTP synthesis. This Bacillus mycoides (strain KBAB4) (Bacillus weihenstephanensis) protein is Thymidylate kinase.